The primary structure comprises 539 residues: Chaperonin GroEL (539 aa).

ATP is bound by residues T30–P33, D87–T91, G414, D479–L481, and D495.

This sequence belongs to the chaperonin (HSP60) family. Forms a cylinder of 14 subunits composed of two heptameric rings stacked back-to-back. Interacts with the co-chaperonin GroES.

It localises to the cytoplasm. The catalysed reaction is ATP + H2O + a folded polypeptide = ADP + phosphate + an unfolded polypeptide.. Together with its co-chaperonin GroES, plays an essential role in assisting protein folding. The GroEL-GroES system forms a nano-cage that allows encapsulation of the non-native substrate proteins and provides a physical environment optimized to promote and accelerate protein folding. In Caldicellulosiruptor bescii (strain ATCC BAA-1888 / DSM 6725 / KCTC 15123 / Z-1320) (Anaerocellum thermophilum), this protein is Chaperonin GroEL.